We begin with the raw amino-acid sequence, 346 residues long: Phosphoribosylformylglycinamidine cyclo-ligase (346 aa).

Belongs to the AIR synthase family.

The protein localises to the cytoplasm. The enzyme catalyses 2-formamido-N(1)-(5-O-phospho-beta-D-ribosyl)acetamidine + ATP = 5-amino-1-(5-phospho-beta-D-ribosyl)imidazole + ADP + phosphate + H(+). The protein operates within purine metabolism; IMP biosynthesis via de novo pathway; 5-amino-1-(5-phospho-D-ribosyl)imidazole from N(2)-formyl-N(1)-(5-phospho-D-ribosyl)glycinamide: step 2/2. The polypeptide is Phosphoribosylformylglycinamidine cyclo-ligase (Bacillus pumilus (strain SAFR-032)).